The sequence spans 208 residues: Uracil phosphoribosyltransferase (208 aa).

5-phospho-alpha-D-ribose 1-diphosphate is bound by residues arginine 78, arginine 103, and 130-138; that span reads DPMLATGGS. Uracil contacts are provided by residues isoleucine 193 and 198–200; that span reads GDA. Aspartate 199 lines the 5-phospho-alpha-D-ribose 1-diphosphate pocket.

The protein belongs to the UPRTase family. Mg(2+) is required as a cofactor.

It catalyses the reaction UMP + diphosphate = 5-phospho-alpha-D-ribose 1-diphosphate + uracil. It functions in the pathway pyrimidine metabolism; UMP biosynthesis via salvage pathway; UMP from uracil: step 1/1. Its activity is regulated as follows. Allosterically activated by GTP. Functionally, catalyzes the conversion of uracil and 5-phospho-alpha-D-ribose 1-diphosphate (PRPP) to UMP and diphosphate. The sequence is that of Uracil phosphoribosyltransferase from Pectobacterium atrosepticum (strain SCRI 1043 / ATCC BAA-672) (Erwinia carotovora subsp. atroseptica).